The chain runs to 477 residues: Ribulose bisphosphate carboxylase large chain (477 aa).

A propeptide spanning residues 1-2 (MS) is cleaved from the precursor. Residue Pro-3 is modified to N-acetylproline. N6,N6,N6-trimethyllysine is present on Lys-14. The substrate site is built by Asn-123 and Thr-173. Catalysis depends on Lys-175, which acts as the Proton acceptor. Residue Lys-177 participates in substrate binding. Mg(2+) is bound by residues Lys-201, Asp-203, and Glu-204. Lys-201 carries the N6-carboxylysine modification. His-294 serves as the catalytic Proton acceptor. Substrate contacts are provided by Arg-295, His-327, and Ser-379.

It belongs to the RuBisCO large chain family. Type I subfamily. As to quaternary structure, heterohexadecamer of 8 large chains and 8 small chains; disulfide-linked. The disulfide link is formed within the large subunit homodimers. Mg(2+) is required as a cofactor. The disulfide bond which can form in the large chain dimeric partners within the hexadecamer appears to be associated with oxidative stress and protein turnover.

The protein localises to the plastid. Its subcellular location is the chloroplast. It carries out the reaction 2 (2R)-3-phosphoglycerate + 2 H(+) = D-ribulose 1,5-bisphosphate + CO2 + H2O. The catalysed reaction is D-ribulose 1,5-bisphosphate + O2 = 2-phosphoglycolate + (2R)-3-phosphoglycerate + 2 H(+). Its function is as follows. RuBisCO catalyzes two reactions: the carboxylation of D-ribulose 1,5-bisphosphate, the primary event in carbon dioxide fixation, as well as the oxidative fragmentation of the pentose substrate in the photorespiration process. Both reactions occur simultaneously and in competition at the same active site. In Nicotiana sylvestris (Wood tobacco), this protein is Ribulose bisphosphate carboxylase large chain.